The chain runs to 127 residues: Protein ApaG (127 aa).

The ApaG domain occupies 3 to 127 (NNPSSKIEVA…FVLSVPRTLH (125 aa)).

The chain is Protein ApaG from Xylella fastidiosa (strain M23).